We begin with the raw amino-acid sequence, 424 residues long: Serine--tRNA ligase (424 aa).

232–234 (TAE) lines the L-serine pocket. 263–265 (RRE) is a binding site for ATP. Glutamate 286 serves as a coordination point for L-serine. Position 350–353 (350–353 (EISS)) interacts with ATP. Residue serine 384 participates in L-serine binding.

This sequence belongs to the class-II aminoacyl-tRNA synthetase family. Type-1 seryl-tRNA synthetase subfamily. In terms of assembly, homodimer. The tRNA molecule binds across the dimer.

It localises to the cytoplasm. It catalyses the reaction tRNA(Ser) + L-serine + ATP = L-seryl-tRNA(Ser) + AMP + diphosphate + H(+). The catalysed reaction is tRNA(Sec) + L-serine + ATP = L-seryl-tRNA(Sec) + AMP + diphosphate + H(+). Its pathway is aminoacyl-tRNA biosynthesis; selenocysteinyl-tRNA(Sec) biosynthesis; L-seryl-tRNA(Sec) from L-serine and tRNA(Sec): step 1/1. Catalyzes the attachment of serine to tRNA(Ser). Is also able to aminoacylate tRNA(Sec) with serine, to form the misacylated tRNA L-seryl-tRNA(Sec), which will be further converted into selenocysteinyl-tRNA(Sec). In Prochlorococcus marinus subsp. pastoris (strain CCMP1986 / NIES-2087 / MED4), this protein is Serine--tRNA ligase.